Consider the following 123-residue polypeptide: ATP synthase epsilon chain (123 aa).

Belongs to the ATPase epsilon chain family. In terms of assembly, F-type ATPases have 2 components, CF(1) - the catalytic core - and CF(0) - the membrane proton channel. CF(1) has five subunits: alpha(3), beta(3), gamma(1), delta(1), epsilon(1). CF(0) has three main subunits: a, b and c.

The protein localises to the cell inner membrane. Produces ATP from ADP in the presence of a proton gradient across the membrane. This is ATP synthase epsilon chain from Helicobacter pylori (strain HPAG1).